The sequence spans 860 residues: DNA gyrase subunit A (860 aa).

Positions 34 to 503 constitute a Topo IIA-type catalytic domain; that stretch reads LPDARDGLKP…EDGELIDTDL (470 aa). Catalysis depends on Y122, which acts as the O-(5'-phospho-DNA)-tyrosine intermediate. A GyrA-box motif is present at residues 530–536; sequence QNRATRG.

It belongs to the type II topoisomerase GyrA/ParC subunit family. Heterotetramer, composed of two GyrA and two GyrB chains. In the heterotetramer, GyrA contains the active site tyrosine that forms a transient covalent intermediate with DNA, while GyrB binds cofactors and catalyzes ATP hydrolysis.

It localises to the cytoplasm. It catalyses the reaction ATP-dependent breakage, passage and rejoining of double-stranded DNA.. Functionally, a type II topoisomerase that negatively supercoils closed circular double-stranded (ds) DNA in an ATP-dependent manner to modulate DNA topology and maintain chromosomes in an underwound state. Negative supercoiling favors strand separation, and DNA replication, transcription, recombination and repair, all of which involve strand separation. Also able to catalyze the interconversion of other topological isomers of dsDNA rings, including catenanes and knotted rings. Type II topoisomerases break and join 2 DNA strands simultaneously in an ATP-dependent manner. The protein is DNA gyrase subunit A of Synechocystis sp. (strain ATCC 27184 / PCC 6803 / Kazusa).